A 231-amino-acid chain; its full sequence is Chalcone--flavanone isomerase (231 aa).

T46, N112, and S189 together coordinate substrate.

Belongs to the chalcone isomerase family.

The enzyme catalyses a chalcone = a flavanone.. The protein operates within secondary metabolite biosynthesis; flavonoid biosynthesis. Its function is as follows. Catalyzes the intramolecular cyclization of bicyclic chalcones into tricyclic (S)-flavanones. Responsible for the isomerization of 4,2',4',6'-tetrahydroxychalcone (also termed chalcone) into naringenin. The polypeptide is Chalcone--flavanone isomerase (CHI) (Hordeum vulgare (Barley)).